Here is a 1036-residue protein sequence, read N- to C-terminus: Cysteine-rich motor neuron 1 protein (1036 aa).

A signal peptide spans 1–34 (MYLVAGDRGLAGCGHLLVSLLGLLLLLARSGTRA). The IGFBP N-terminal domain maps to 35-112 (LVCLPCDESK…EYEAGVCEDE (78 aa)). Topologically, residues 35-939 (LVCLPCDESK…HPSEDSSLDS (905 aa)) are extracellular. 4 cysteine pairs are disulfide-bonded: Cys37/Cys60, Cys40/Cys62, Cys45/Cys63, and Cys51/Cys66. Asn71 is a glycosylation site (N-linked (GlcNAc...) asparagine). Cystine bridges form between Cys74–Cys90 and Cys84–Cys109. Asn113 carries an N-linked (GlcNAc...) asparagine glycan. A Cell attachment site motif is present at residues 314–316 (RGD). A glycan (N-linked (GlcNAc...) asparagine) is linked at Asn330. VWFC domains lie at 334–391 (PACV…PVCE) and 401–457 (AGCY…PVCE). Antistasin-like domains are found at residues 469–498 (CGEL…TCQC), 505–532 (CSER…ICEC), 539–564 (CRPI…ICRC), and 567–592 (CPEL…ICKC). Asn474 carries N-linked (GlcNAc...) asparagine glycosylation. VWFC domains follow at residues 606 to 663 (GTCL…PSCA) and 677 to 735 (SICH…PQCT). Asn746 carries an N-linked (GlcNAc...) asparagine glycan. VWFC domains follow at residues 751-809 (NYCK…PYCI) and 817-874 (VVCH…PMCP). A helical transmembrane segment spans residues 940–960 (IASVVVPIIICLSIIIAFLFI). The Cytoplasmic segment spans residues 961–1036 (NQKKQWIPLL…LQADNFYQTV (76 aa)). The residue at position 1035 (Thr1035) is a Phosphothreonine.

As to quaternary structure, interacts with BMP4 and BMP7. Post-translationally, N-glycosylated. As to expression, expressed in pancreas, kidney, skeletal muscle, lung, placenta, brain, heart, spleen, liver and small intestine. Expressed in blood vessels (at protein level).

It localises to the secreted. The protein localises to the cell membrane. Its function is as follows. May play a role in CNS development by interacting with growth factors implicated in motor neuron differentiation and survival. May play a role in capillary formation and maintenance during angiogenesis. Modulates BMP activity by affecting its processing and delivery to the cell surface. The protein is Cysteine-rich motor neuron 1 protein (CRIM1) of Homo sapiens (Human).